Here is a 425-residue protein sequence, read N- to C-terminus: Adenylosuccinate synthetase (425 aa).

Residues 12-18 and 40-42 contribute to the GTP site; these read GDEGKGK and GHT. D13 functions as the Proton acceptor in the catalytic mechanism. Mg(2+) is bound by residues D13 and G40. Residues 13 to 16, 38 to 41, T130, R144, Q224, T239, and R301 contribute to the IMP site; these read DEGK and NAGH. Residue H41 is the Proton donor of the active site. 297 to 303 provides a ligand contact to substrate; sequence TVSNRRR. Residues R303, 329 to 331, and 411 to 413 each bind GTP; these read KLD and STS.

This sequence belongs to the adenylosuccinate synthetase family. Homodimer. Mg(2+) is required as a cofactor.

The protein localises to the cytoplasm. The enzyme catalyses IMP + L-aspartate + GTP = N(6)-(1,2-dicarboxyethyl)-AMP + GDP + phosphate + 2 H(+). The protein operates within purine metabolism; AMP biosynthesis via de novo pathway; AMP from IMP: step 1/2. Functionally, plays an important role in the de novo pathway of purine nucleotide biosynthesis. Catalyzes the first committed step in the biosynthesis of AMP from IMP. In Wolbachia pipientis wMel, this protein is Adenylosuccinate synthetase.